We begin with the raw amino-acid sequence, 570 residues long: Periplasmic trehalase (570 aa).

A signal peptide spans Met-1–Ala-34. Residues Arg-159, Trp-166–Asp-167, Asn-203, His-212–Gln-214, Arg-284–Glu-286, and Gly-317 each bind substrate. Residues Asp-319 and Glu-503 each act as proton donor/acceptor in the active site. Substrate is bound at residue Glu-518. Positions Lys-544 to Gln-570 are disordered. A compositionally biased stretch (low complexity) spans Pro-554–Gln-570.

Belongs to the glycosyl hydrolase 37 family. Monomer.

The protein localises to the periplasm. The enzyme catalyses alpha,alpha-trehalose + H2O = alpha-D-glucose + beta-D-glucose. In terms of biological role, provides the cells with the ability to utilize trehalose at high osmolarity by splitting it into glucose molecules that can subsequently be taken up by the phosphotransferase-mediated uptake system. This chain is Periplasmic trehalase, found in Salmonella paratyphi C (strain RKS4594).